The chain runs to 89 residues: Small ribosomal subunit protein bS20 (89 aa).

Residues 1 to 21 are disordered; the sequence is MANSAQAKKRARQNVKARKHN. The segment covering 7 to 21 has biased composition (basic residues); it reads AKKRARQNVKARKHN.

Belongs to the bacterial ribosomal protein bS20 family.

Its function is as follows. Binds directly to 16S ribosomal RNA. This chain is Small ribosomal subunit protein bS20, found in Acinetobacter baylyi (strain ATCC 33305 / BD413 / ADP1).